The sequence spans 404 residues: MRLDTMKETPSSPVNTEMQDNFGCAVGNRFHQLLDDESDPLDFLYQSGVELTRRKKKEDAAAKKSANQKSGKKESQKDRKAAVVGGNTDVKMTPQTESGKVSQKDRKTFVVGGNTDVKVTQPGQKHAPKNMEKAPQNENVGSQVKVDRAERRPAFREVRPNIMDRSNEYSIEKPMEILDQDKQMRNYGGRGGMRGRGRGGFPRNTENDNLRGKREFDRHSGSDRAIRPEDKRGGSGPRNWGSIKEAFSEIEAIPVEEQIETTETTEATEEEHAKVPEEKNEGFSQEMSLDEWRSLQDQNRSKTEFNLRKPEAAVPTKAVVIHKSKFKNNLSENEEDYHYCFRKPVNDITAQLDINFGSLTRPSRGRGGGGRGRVRREEAFPHEVINVLADAPNPDDPEDFPALA.

3 disordered regions span residues 1–21, 51–288, and 359–379; these read MRLD…MQDN, LTRR…QEMS, and LTRP…REEA. Polar residues predominate over residues 8-19; that stretch reads ETPSSPVNTEMQ. Composition is skewed to basic and acidic residues over residues 71–81, 145–159, and 165–184; these read GKKESQKDRKA, KVDR…REVR, and RSNE…DKQM. Residues 188–200 show a composition bias toward gly residues; the sequence is GGRGGMRGRGRGG. Composition is skewed to basic and acidic residues over residues 205 to 233 and 270 to 281; these read TEND…DKRG and EEHAKVPEEKNE.

Belongs to the SERBP1-HABP4 family. As to quaternary structure, associates with ribosomes; promoting ribosome stabilization. Interacts with eef2/eEF2; promoting ribosome stabilization.

It is found in the nucleus. Its subcellular location is the cytoplasm. The protein resides in the stress granule. The protein localises to the nucleolus. It localises to the nucleus speckle. It is found in the cajal body. Its function is as follows. Ribosome-binding protein that promotes ribosome hibernation, a process during which ribosomes are stabilized in an inactive state and preserved from proteasomal degradation. Acts via its association with eef2/eEF2 factor at the A-site of the ribosome, promoting ribosome stabilization in an inactive state compatible with storage. Plays a key role in ribosome hibernation in the mature egg by promoting ribosome stabilization. Ribosomes, which are produced in large quantities during oogenesis, are stored and translationally repressed in the egg and early embryo. In Xenopus laevis (African clawed frog), this protein is Intracellular hyaluronan-binding protein 4.L.